The primary structure comprises 2444 residues: Protein SON (2444 aa).

Residue Ala-2 is modified to N-acetylalanine. At Lys-16 the chain carries N6-acetyllysine. The segment covering 23-37 (ELSSGRSEGQLNGET) has biased composition (polar residues). The tract at residues 23-58 (ELSSGRSEGQLNGETNPPIEGNQAGDTAASARSLPN) is disordered. Lys-64 participates in a covalent cross-link: Glycyl lysine isopeptide (Lys-Gly) (interchain with G-Cter in SUMO2). A compositionally biased stretch (basic and acidic residues) spans 79-88 (YKPDLKEASR). The segment at 79–155 (YKPDLKEASR…GNLESDSFLK (77 aa)) is disordered. Residue Ser-94 is modified to Phosphoserine. Residues 106–130 (KKSKKHKKHKNKKKKKKKEKEKKYK) are compositionally biased toward basic residues. Basic and acidic residues predominate over residues 131–155 (RQPEESESKLKSHHDGNLESDSFLK). Residues Ser-142, Ser-150, Ser-152, and Ser-158 each carry the phosphoserine modification. Lys-284 is modified (N6-acetyllysine). Disordered regions lie at residues 301-358 (TLTI…ESLE) and 391-468 (GPPV…PEPP). Pro residues-rich tracts occupy residues 393 to 406 (PVTP…PSAT) and 420 to 439 (PELP…PSVT). The residue at position 395 (Thr-395) is a Phosphothreonine. The tract at residues 721-850 (LASNTMDSQM…LATSSMDSQM (130 aa)) is 13 X 10 AA tandem repeats of L-A-[ST]-[NSG]-[TS]-MDSQM. The 11 X 7 AA tandem repeats of [DR]-P-Y-R-[LI][AG][QHP] stretch occupies residues 907-983 (DPYRLAQDPY…IAPRPYRLAP (77 aa)). Arg-945 is modified (omega-N-methylarginine). Position 954 is a phosphothreonine (Thr-954). Ser-993 bears the Phosphoserine mark. 14 repeat units span residues 1001 to 1006 (ERSMMS), 1009 to 1014 (ERSMMS), 1016 to 1021 (ERSMMS), 1025 to 1030 (ERSMMS), 1033 to 1038 (ERSMMS), 1041 to 1046 (ERSMMS), 1050 to 1055 (ERSMMS), 1058 to 1063 (ERSMMS), 1066 to 1071 (ERSMMS), 1075 to 1080 (DRSMMS), 1084 to 1089 (DRSMMS), 1095 to 1100 (DRSMMS), 1106 to 1111 (DRSMMS), and 1115 to 1120 (DRSMMS). A 14 X 6 AA repeats of [ED]-R-S-M-M-S region spans residues 1001–1120 (ERSMMSSYER…SSYTDRSMMS (120 aa)). Arg-1002 carries the asymmetric dimethylarginine modification. An Asymmetric dimethylarginine modification is found at Arg-1017. Ser-1030 and Ser-1038 each carry phosphoserine. Ser-1055 and Ser-1063 each carry phosphoserine. Phosphoserine is present on Ser-1077. Residues 1141 to 1168 (PPLPPEEPPTMPPLPPEEPPMTPPLPPE) are compositionally biased toward pro residues. Positions 1141 to 1173 (PPLPPEEPPTMPPLPPEEPPMTPPLPPEEPPEG) are 3 X 11 AA tandem repats of P-P-L-P-P-E-E-P-P-[TME]-[MTG]. The segment at 1141–1213 (PPLPPEEPPT…PEPPVSQSEI (73 aa)) is disordered. The segment covering 1177–1213 (STEQSALTADNTWSTEVTLSTGESLSQPEPPVSQSEI) has biased composition (polar residues). A phosphoserine mark is found at Ser-1678, Ser-1723, Ser-1727, Ser-1772, Ser-1784, Ser-1791, Ser-1794, Ser-1807, and Ser-1808. Positions 1802–2072 (ERASESSSEE…RSPKRLTDLD (271 aa)) are disordered. 3 stretches are compositionally biased toward basic and acidic residues: residues 1815–1826 (YEIFVKVKDTHE), 1834–1847 (RDKG…DSSL), and 1855–1870 (KSSE…ESRS). 2 stretches are compositionally biased toward basic residues: residues 1871–1934 (RARK…RKRS) and 1942–1973 (AARA…RRRS). 7 tandem repeats follow at residues 1950-1956 (PSRRSRS), 1959-1977 (PSRR…FSIS), 1978-1984 (PSRRSRT), 1985-1991 (PSRRSRT), 1992-1998 (PSRRSRT), 1999-2005 (PSRRSRT), and 2006-2012 (PSRRSRT). The tract at residues 1950-2019 (PSRRSRSHTP…SRTPSRRRRS (70 aa)) is 7 X 7 AA repeats of P-S-R-R-S-R-[TS]. Positions 1959-2030 (PSRRRRSRSV…SAVRRRSFSI (72 aa)) are 2 X 19 AA repeats of P-S-R-R-R-R-S-R-S-V-V-R-R-R-S-F-S-I-S. Phosphoserine occurs at positions 1973, 1975, and 1977. Residues 1980 to 2027 (RRSRTPSRRSRTPSRRSRTPSRRSRTPSRRSRTPSRRRRSRSAVRRRS) show a composition bias toward basic residues. A 2-7; approximate repeat occupies 2013-2019 (PSRRRRS). A 3-2; approximate repeat occupies 2020–2030 (RSAVRRRSFSI). 5 positions are modified to phosphoserine: Ser-2027, Ser-2029, Ser-2031, Ser-2047, and Ser-2049. Residues 2031-2057 (SPVRLRRSRTPLRRRFSRSPIRRKRSR) form a 3 X tandem repeats of [ST]-P-[VLI]-R-[RL]-[RK]-[RF]-S-R region. Positions 2034–2056 (RLRRSRTPLRRRFSRSPIRRKRS) are enriched in basic residues. The segment covering 2057 to 2072 (RSSERGRSPKRLTDLD) has biased composition (basic and acidic residues). Lys-2073 is modified (N6-acetyllysine; alternate). Lys-2073 participates in a covalent cross-link: Glycyl lysine isopeptide (Lys-Gly) (interchain with G-Cter in SUMO2); alternate. Lys-2110 participates in a covalent cross-link: Glycyl lysine isopeptide (Lys-Gly) (interchain with G-Cter in SUMO2). Ser-2147 carries the post-translational modification Phosphoserine. Residue Lys-2167 forms a Glycyl lysine isopeptide (Lys-Gly) (interchain with G-Cter in SUMO2) linkage. Thr-2181 carries the post-translational modification Phosphothreonine. Residues 2192 to 2238 (EFPVSSGSQHRKKEADSVYGEWVPVEKNGEESKDDDNVFSSSLPSEP) are disordered. Phosphoserine is present on Ser-2256. The region spanning 2323-2369 (TGGMGAVLMRKMGWREGEGLGKNKEGNKEPILVDFKTDRKGLVAVGE) is the G-patch domain. A DRBM domain is found at 2389–2444 (HPVSALMEICNKRRWQPPEFLLVHDSGPDHRKHFLFRVLRNGSPYQPNCMFFLNRY).

Interacts with SRSF2. Associates with the spliceosome. Interacts with USH1G. As to expression, widely expressed. Highly expressed in brain, heart, spleen, liver, skeletal muscle, kidney and testis.

It is found in the nucleus speckle. RNA-binding protein that acts as a mRNA splicing cofactor by promoting efficient splicing of transcripts that possess weak splice sites. Specifically promotes splicing of many cell-cycle and DNA-repair transcripts that possess weak splice sites, such as TUBG1, KATNB1, TUBGCP2, AURKB, PCNT, AKT1, RAD23A, and FANCG. Probably acts by facilitating the interaction between Serine/arginine-rich proteins such as SRSF2 and the RNA polymerase II. Also binds to DNA; binds to the consensus DNA sequence: 5'-GA[GT]AN[CG][AG]CC-3'. Essential for correct RNA splicing of multiple genes critical for brain development, neuronal migration and metabolism, including TUBG1, FLNA, PNKP, WDR62, PSMD3, PCK2, PFKL, IDH2, and ACY1. May also regulate the ghrelin signaling in hypothalamic neuron by acting as a negative regulator of GHSR expression. The protein is Protein SON (Son) of Mus musculus (Mouse).